Consider the following 61-residue polypeptide: uncharacterized protein (61 aa).

The protein localises to the mitochondrion. This is an uncharacterized protein from Marchantia polymorpha (Common liverwort).